Consider the following 212-residue polypeptide: uncharacterized protein (212 aa).

The Toprim domain occupies 105–187; that stretch reads NTIYLVEGDF…QVKVVQLKGK (83 aa).

This is an uncharacterized protein from Mycoplasma pneumoniae (strain ATCC 29342 / M129 / Subtype 1) (Mycoplasmoides pneumoniae).